We begin with the raw amino-acid sequence, 459 residues long: Sorting nexin-8 (459 aa).

A disordered region spans residues 1 to 53 (MTGGAMDPLPTAPGAAAAEAEVDEEADPPAADSPVPPVSEPRAPDAGQMQVPP). The PX domain occupies 68–176 (ARDAVQVELV…KLFLSFSGPD (109 aa)). A 1,2-diacyl-sn-glycero-3-phospho-(1D-myo-inositol-3-phosphate) is bound by residues R104, K130, and R143.

The protein belongs to the sorting nexin family.

The protein localises to the early endosome membrane. In terms of biological role, may be involved in several stages of intracellular trafficking. May play a role in intracellular protein transport from early endosomes to the trans-Golgi network. This is Sorting nexin-8 (SNX8) from Bos taurus (Bovine).